The following is a 237-amino-acid chain: Ribonuclease 3 (237 aa).

The region spanning 4–133 (LTELENSLGV…VLAAIYIDKG (130 aa)) is the RNase III domain. Glutamate 46 is a binding site for Mg(2+). Active-site residues include aspartate 50 and glutamate 122. Residue glutamate 122 coordinates Mg(2+). The region spanning 160-229 (DYKSRLQELI…AKVALQQFEN (70 aa)) is the DRBM domain.

It belongs to the ribonuclease III family. As to quaternary structure, homodimer. Mg(2+) is required as a cofactor.

The protein localises to the cytoplasm. The enzyme catalyses Endonucleolytic cleavage to 5'-phosphomonoester.. Functionally, digests double-stranded RNA. Involved in the processing of primary rRNA transcript to yield the immediate precursors to the large and small rRNAs (23S and 16S). Processes some mRNAs, and tRNAs when they are encoded in the rRNA operon. Processes pre-crRNA and tracrRNA of type II CRISPR loci if present in the organism. This Dehalococcoides mccartyi (strain CBDB1) protein is Ribonuclease 3.